The primary structure comprises 197 residues: MSASRFIKCVTVGDGAVGKTCLLISYTSNTFPTDYVPTVFDNFSANVVVNGATVNLGLWDTAGQEDYNRLRPLSYRGADVFILAFSLISKASYENVSKKWIPELKHYAPGVPIVLVGTKLDLRDDKQFFIDHPGAVPITTAQGEELKKLIGAPAYIECSSKTQENVKGVFDAAIRVVLQPPKQKKKKSKAQKACSIL.

Position 13–20 (13–20) interacts with GTP; sequence GDGAVGKT. Residues 35–43 carry the Effector region motif; the sequence is YVPTVFDNF. Residues 60–64 and 118–121 each bind GTP; these read DTAGQ and TKLD. Residue Cys194 is modified to Cysteine methyl ester. The S-geranylgeranyl cysteine moiety is linked to residue Cys194. Positions 195 to 197 are cleaved as a propeptide — removed in mature form; sequence SIL.

The protein belongs to the small GTPase superfamily. Rho family. Interacts with SPK1. As to expression, ubiquitous.

The protein localises to the cytoplasm. It localises to the membrane. Inactive GDP-bound Rho GTPases reside in the cytosol, are found in a complex with Rho GDP-dissociation inhibitors (Rho GDIs), and are released from the GDI protein in order to translocate to membranes upon activation. This is Rac-like GTP-binding protein ARAC1 (ARAC1) from Arabidopsis thaliana (Mouse-ear cress).